Consider the following 144-residue polypeptide: ATP synthase epsilon chain (144 aa).

The protein belongs to the ATPase epsilon chain family. In terms of assembly, F-type ATPases have 2 components, CF(1) - the catalytic core - and CF(0) - the membrane proton channel. CF(1) has five subunits: alpha(3), beta(3), gamma(1), delta(1), epsilon(1). CF(0) has three main subunits: a, b and c.

Its subcellular location is the cell inner membrane. Its function is as follows. Produces ATP from ADP in the presence of a proton gradient across the membrane. The sequence is that of ATP synthase epsilon chain from Ectopseudomonas mendocina (strain ymp) (Pseudomonas mendocina).